A 424-amino-acid polypeptide reads, in one-letter code: Insertion element IS2A uncharacterized 48.2 kDa protein (424 aa).

An Integrase catalytic domain is found at Lys-229–Ala-412.

This sequence belongs to the transposase 8 family.

This is Insertion element IS2A uncharacterized 48.2 kDa protein from Escherichia coli.